The primary structure comprises 286 residues: tRNA pseudouridine synthase A (286 aa).

The active-site Nucleophile is Asp-60. Residue Tyr-132 participates in substrate binding.

The protein belongs to the tRNA pseudouridine synthase TruA family. In terms of assembly, homodimer.

The catalysed reaction is uridine(38/39/40) in tRNA = pseudouridine(38/39/40) in tRNA. Formation of pseudouridine at positions 38, 39 and 40 in the anticodon stem and loop of transfer RNAs. The protein is tRNA pseudouridine synthase A of Mycobacterium leprae (strain TN).